We begin with the raw amino-acid sequence, 340 residues long: S-adenosylmethionine:tRNA ribosyltransferase-isomerase (340 aa).

Belongs to the QueA family. Monomer.

It localises to the cytoplasm. It carries out the reaction 7-aminomethyl-7-carbaguanosine(34) in tRNA + S-adenosyl-L-methionine = epoxyqueuosine(34) in tRNA + adenine + L-methionine + 2 H(+). Its pathway is tRNA modification; tRNA-queuosine biosynthesis. Its function is as follows. Transfers and isomerizes the ribose moiety from AdoMet to the 7-aminomethyl group of 7-deazaguanine (preQ1-tRNA) to give epoxyqueuosine (oQ-tRNA). The polypeptide is S-adenosylmethionine:tRNA ribosyltransferase-isomerase (Macrococcus caseolyticus (strain JCSC5402) (Macrococcoides caseolyticum)).